Here is a 110-residue protein sequence, read N- to C-terminus: MDNIDVIEELYNVILDRKENGKENSYTNYLFEKGIDKILKKVGEETTEVIVAAKNTNKDDLIAEVCDVIYHMVVLMVEKEVKLEDIKNELNKRRKKVGNKKPERRKIENI.

Belongs to the PRA-PH family.

It is found in the cytoplasm. It catalyses the reaction 1-(5-phospho-beta-D-ribosyl)-ATP + H2O = 1-(5-phospho-beta-D-ribosyl)-5'-AMP + diphosphate + H(+). It functions in the pathway amino-acid biosynthesis; L-histidine biosynthesis; L-histidine from 5-phospho-alpha-D-ribose 1-diphosphate: step 2/9. The sequence is that of Phosphoribosyl-ATP pyrophosphatase from Clostridium novyi (strain NT).